The primary structure comprises 312 residues: Elongation factor Ts, mitochondrial (312 aa).

This sequence belongs to the EF-Ts family.

It localises to the mitochondrion. Functionally, associates with the EF-Tu.GDP complex and induces the exchange of GDP to GTP. It remains bound to the aminoacyl-tRNA.EF-Tu.GTP complex up to the GTP hydrolysis stage on the ribosome. The sequence is that of Elongation factor Ts, mitochondrial (tsfm) from Xenopus laevis (African clawed frog).